A 422-amino-acid chain; its full sequence is Metallocarboxypeptidase A-like protein TRV_02598 (422 aa).

Positions M1–G16 are cleaved as a signal peptide. A propeptide spans G17–N119 (activation peptide). One can recognise a Peptidase M14 domain in the interval S125–L421. 2 residues coordinate Zn(2+): H185 and E188. Residues H185–E188, R240, and N256–R257 contribute to the substrate site. Cysteines 250 and 273 form a disulfide. H311 contributes to the Zn(2+) binding site. S312–Y313 serves as a coordination point for substrate. Catalysis depends on E387, which acts as the Proton donor/acceptor.

The protein belongs to the peptidase M14 family. Zn(2+) serves as cofactor.

The protein localises to the secreted. Its function is as follows. Extracellular metalloprotease that contributes to pathogenicity. This is Metallocarboxypeptidase A-like protein TRV_02598 from Trichophyton verrucosum (strain HKI 0517).